Consider the following 365-residue polypeptide: Histidinol-phosphate aminotransferase (365 aa).

The tract at residues 1–22 (MSRPVPNPGILDIAPYTPGKSP) is disordered. Position 221 is an N6-(pyridoxal phosphate)lysine (K221).

The protein belongs to the class-II pyridoxal-phosphate-dependent aminotransferase family. Histidinol-phosphate aminotransferase subfamily. As to quaternary structure, homodimer. Requires pyridoxal 5'-phosphate as cofactor.

It catalyses the reaction L-histidinol phosphate + 2-oxoglutarate = 3-(imidazol-4-yl)-2-oxopropyl phosphate + L-glutamate. It participates in amino-acid biosynthesis; L-histidine biosynthesis; L-histidine from 5-phospho-alpha-D-ribose 1-diphosphate: step 7/9. This is Histidinol-phosphate aminotransferase from Rhodopseudomonas palustris (strain BisA53).